The following is a 45-amino-acid chain: Unknown protein from spots 23/28/205 of 2D-PAGE of thylakoid (45 aa).

It is found in the plastid. Its subcellular location is the chloroplast thylakoid. The sequence is that of Unknown protein from spots 23/28/205 of 2D-PAGE of thylakoid from Pisum sativum (Garden pea).